A 1034-amino-acid chain; its full sequence is AP-3 complex subunit delta (1034 aa).

10 HEAT repeats span residues 35-72 (KYIS…LGYD), 143-180 (DLSR…RYPE), 181-217 (ALRP…KNPK), 219-255 (YLPL…LEPR), 258-297 (KKLI…GMPN), 299-337 (SASI…THPK), 338-374 (SVQA…KKNL), 376-414 (EIVK…LYVT), 415-452 (NFEW…RVPV), and 570-609 (NSAC…EIVQ). Disordered regions lie at residues 637–660 (DLDE…EHDK), 669–688 (QAGT…ELTP), 701–723 (EQSN…NADQ), and 758–1034 (QEQQ…KEIL). Ser-683 bears the Phosphoserine mark. Thr-687 bears the Phosphothreonine mark. Residues 769-784 (GKKKHKKGKKSKKAKN) are compositionally biased toward basic residues. Composition is skewed to basic and acidic residues over residues 822–836 (KDGK…RALD) and 882–906 (KDKD…RKEA). Positions 928–942 (SATSNNNNTSTVLPD) are enriched in low complexity. Basic residues predominate over residues 986 to 1003 (KVHKKKHKKEKSQRKEKK). The segment covering 1007 to 1016 (ESASVSAIVS) has biased composition (low complexity). Positions 1025-1034 (GISTPSKEIL) are enriched in polar residues.

This sequence belongs to the adaptor complexes large subunit family. In terms of assembly, adaptor protein complex 3 (AP-3) is a heterotetramer composed of two large chains (delta and beta3), a medium chain (mu3) and a small chain (sigma3).

The protein localises to the cytoplasmic vesicle. It is found in the clathrin-coated vesicle membrane. Its subcellular location is the golgi apparatus. Functionally, part of the AP-3 complex, an adapter-related complex which is not clathrin-associated. The complex is associated with the Golgi region as well as more peripheral structures. It facilitates the budding of vesicles from the Golgi membrane and may be directly involved in trafficking to lysosomes. May be a coat protein involved in the formation of specialized structures like pigment granules. The protein is AP-3 complex subunit delta (g) of Drosophila melanogaster (Fruit fly).